The following is a 360-amino-acid chain: Phospho-N-acetylmuramoyl-pentapeptide-transferase (360 aa).

10 helical membrane passes run 21-41, 73-93, 94-114, 132-152, 168-188, 199-219, 239-259, 263-283, 288-308, and 338-358; these read YLTF…LWIG, TMGG…WGDL, SNPY…IGFV, WKYF…YALG, IMPQ…VGTS, GLAI…AWAT, LVIF…FNTY, VFMG…IAVL, FLLV…ILQV, and VIIR…VTLK.

Belongs to the glycosyltransferase 4 family. MraY subfamily. Mg(2+) is required as a cofactor.

It localises to the cell inner membrane. It catalyses the reaction UDP-N-acetyl-alpha-D-muramoyl-L-alanyl-gamma-D-glutamyl-meso-2,6-diaminopimeloyl-D-alanyl-D-alanine + di-trans,octa-cis-undecaprenyl phosphate = di-trans,octa-cis-undecaprenyl diphospho-N-acetyl-alpha-D-muramoyl-L-alanyl-D-glutamyl-meso-2,6-diaminopimeloyl-D-alanyl-D-alanine + UMP. It functions in the pathway cell wall biogenesis; peptidoglycan biosynthesis. Catalyzes the initial step of the lipid cycle reactions in the biosynthesis of the cell wall peptidoglycan: transfers peptidoglycan precursor phospho-MurNAc-pentapeptide from UDP-MurNAc-pentapeptide onto the lipid carrier undecaprenyl phosphate, yielding undecaprenyl-pyrophosphoryl-MurNAc-pentapeptide, known as lipid I. The polypeptide is Phospho-N-acetylmuramoyl-pentapeptide-transferase (Mannheimia succiniciproducens (strain KCTC 0769BP / MBEL55E)).